The sequence spans 448 residues: NADP-specific glutamate dehydrogenase (448 aa).

Positions 88, 109, and 112 each coordinate substrate. K124 serves as the catalytic Proton donor. G163 contacts substrate. NADP(+) is bound by residues T207 and N238. S381 contributes to the substrate binding site.

It belongs to the Glu/Leu/Phe/Val dehydrogenases family. As to quaternary structure, homohexamer.

The catalysed reaction is L-glutamate + NADP(+) + H2O = 2-oxoglutarate + NH4(+) + NADPH + H(+). Functionally, catalyzes the reversible oxidative deamination of glutamate to alpha-ketoglutarate and ammonia. This chain is NADP-specific glutamate dehydrogenase (gdhA), found in Helicobacter pylori (strain J99 / ATCC 700824) (Campylobacter pylori J99).